The following is a 295-amino-acid chain: Acetylglutamate kinase (295 aa).

Substrate is bound by residues 66-67 (GG), arginine 88, and asparagine 193.

It belongs to the acetylglutamate kinase family. ArgB subfamily.

The protein localises to the cytoplasm. It carries out the reaction N-acetyl-L-glutamate + ATP = N-acetyl-L-glutamyl 5-phosphate + ADP. It participates in amino-acid biosynthesis; L-arginine biosynthesis; N(2)-acetyl-L-ornithine from L-glutamate: step 2/4. Its function is as follows. Catalyzes the ATP-dependent phosphorylation of N-acetyl-L-glutamate. This Rhizobium johnstonii (strain DSM 114642 / LMG 32736 / 3841) (Rhizobium leguminosarum bv. viciae) protein is Acetylglutamate kinase.